Reading from the N-terminus, the 110-residue chain is Thioredoxin (110 aa).

Residues 2–110 (SALLVEIDKD…IDAMIAKHVG (109 aa)) enclose the Thioredoxin domain. Cys-33 and Cys-36 form a disulfide bridge.

It belongs to the thioredoxin family.

In terms of biological role, participates in various redox reactions through the reversible oxidation of its active center dithiol to a disulfide and catalyzes dithiol-disulfide exchange reactions. This Peptoclostridium acidaminophilum (Eubacterium acidaminophilum) protein is Thioredoxin (trxA).